The chain runs to 560 residues: Calnexin homolog (560 aa).

The first 22 residues, 1–22, serve as a signal peptide directing secretion; sequence MKYGKVSFLALLCSLYVRGSLA. Topologically, residues 23–489 are lumenal; that stretch reads DPESEQEPLV…ETIIETPEIG (467 aa). A disulfide bond links C132 and C163. Positions 136, 138, 154, and 161 each coordinate an alpha-D-glucoside. The segment at 242–375 is p domain (Extended arm); the sequence is IYDPEDIKPA…RKIPNPDYFD (134 aa). 5 consecutive repeat copies span residues 244–255, 261–272, 280–291, 299–310, and 314–324. 4 X approximate repeats regions lie at residues 244 to 310 and 314 to 371; these read DPED…DWDD and GDWI…IPNP. A disordered region spans residues 253 to 273; that stretch reads WVDEPEIPDPNAVKPDDWDED. C326 and C332 are disulfide-bonded. Repeat copies occupy residues 333–343, 347–357, and 361–371. E391 provides a ligand contact to an alpha-D-glucoside. An N-linked (GlcNAc...) asparagine glycan is attached at N418. A helical membrane pass occupies residues 490–512; it reads IAIVAVLGSLTAVILTCYFYFFA. The Cytoplasmic portion of the chain corresponds to 513–560; sequence SSSPASLSTGTTEAEKEQQEKFKQETETEKIDVSYAPETESPTAKNED. The tract at residues 517-560 is disordered; sequence ASLSTGTTEAEKEQQEKFKQETETEKIDVSYAPETESPTAKNED. Basic and acidic residues predominate over residues 525–544; it reads EAEKEQQEKFKQETETEKID. T551 carries the post-translational modification Phosphothreonine. Residue S553 is modified to Phosphoserine. T555 bears the Phosphothreonine mark.

Belongs to the calreticulin family.

Its subcellular location is the endoplasmic reticulum membrane. In terms of biological role, calcium-binding protein that interacts with newly synthesized monoglucosylated glycoproteins in the endoplasmic reticulum. It may act in assisting protein assembly and/or in the retention within the ER of unassembled protein subunits. It seems to play a major role in the quality control apparatus of the ER by the retention of incorrectly folded proteins. The sequence is that of Calnexin homolog (cal1) from Schizosaccharomyces pombe (strain 972 / ATCC 24843) (Fission yeast).